A 144-amino-acid polypeptide reads, in one-letter code: MCTDVAFFSLDCLATWLGGVCSTSDLRLPNFGSLNVTVGILFNPGSGVLLTTAPEVPLAFMIDLVCEPVGLVDFLTTGVSRLETEENGPVEFVSGIADEPILACSAPERVFEATPFLLFFRLDLFVIASLHYNYGQYSSFWSLL.

The N-terminal stretch at Met-1–Ser-22 is a signal peptide.

This is an uncharacterized protein from Saccharomyces cerevisiae (strain ATCC 204508 / S288c) (Baker's yeast).